We begin with the raw amino-acid sequence, 63 residues long: Male-specific sperm protein Mst84Da (63 aa).

Belongs to the MST(3)CGP family. In terms of tissue distribution, testis.

The chain is Male-specific sperm protein Mst84Da (Mst84Da) from Drosophila melanogaster (Fruit fly).